Consider the following 348-residue polypeptide: Sesquiterpene synthase MGU_11447 (348 aa).

Residues D91 and D96 each contribute to the Mg(2+) site. The DDXXXD motif signature appears at 91–96 (DDLFVD). R184 lines the substrate pocket. Mg(2+) is bound by residues N230, S234, and E238.

It belongs to the terpene synthase family. Mg(2+) serves as cofactor.

It carries out the reaction (2E,6E)-farnesyl diphosphate + H2O = (+)-corvol ether B + diphosphate. The catalysed reaction is (2E,6E)-farnesyl diphosphate + H2O = (+)-corvol ether A + diphosphate. Functionally, terpene synthase that catalyzes the conversion of (2E,6E)-farnesyl diphosphate (FPP) into sesquiterpenes which are important for fungi-environment interactions. Produces a mixture consisting of 8 sesquiterpenes including corvol ethers A and B, as well as traces of epizonarene, gamma-cadinene, delta-cadinene, alpha-cadinene, alpha-cadinol, and an unidentified sesquiterpene. Produces both corvol ether A and corvol ether B in similar concentrations. This is Sesquiterpene synthase MGU_11447 from Metarhizium guizhouense (strain ARSEF 977).